We begin with the raw amino-acid sequence, 376 residues long: Chorismate synthase (376 aa).

NADP(+)-binding residues include arginine 39 and arginine 45. FMN-binding positions include 115–117 (RSS), glycine 276, 291–295 (KPIPT), and arginine 317.

Belongs to the chorismate synthase family. Homotetramer. The cofactor is FMNH2.

The enzyme catalyses 5-O-(1-carboxyvinyl)-3-phosphoshikimate = chorismate + phosphate. It functions in the pathway metabolic intermediate biosynthesis; chorismate biosynthesis; chorismate from D-erythrose 4-phosphate and phosphoenolpyruvate: step 7/7. Functionally, catalyzes the anti-1,4-elimination of the C-3 phosphate and the C-6 proR hydrogen from 5-enolpyruvylshikimate-3-phosphate (EPSP) to yield chorismate, which is the branch point compound that serves as the starting substrate for the three terminal pathways of aromatic amino acid biosynthesis. This reaction introduces a second double bond into the aromatic ring system. This Thermotoga maritima (strain ATCC 43589 / DSM 3109 / JCM 10099 / NBRC 100826 / MSB8) protein is Chorismate synthase.